Reading from the N-terminus, the 339-residue chain is NADH-quinone oxidoreductase subunit H (339 aa).

Helical transmembrane passes span Ile9–Cys29, Ile82–Ile102, Val115–Gly135, Met161–Val181, Met187–Leu207, Met235–Thr255, Ile275–Ile295, and Gly311–Ile331.

This sequence belongs to the complex I subunit 1 family. In terms of assembly, NDH-1 is composed of 14 different subunits. Subunits NuoA, H, J, K, L, M, N constitute the membrane sector of the complex.

Its subcellular location is the cell inner membrane. The catalysed reaction is a quinone + NADH + 5 H(+)(in) = a quinol + NAD(+) + 4 H(+)(out). Its function is as follows. NDH-1 shuttles electrons from NADH, via FMN and iron-sulfur (Fe-S) centers, to quinones in the respiratory chain. The immediate electron acceptor for the enzyme in this species is believed to be ubiquinone. Couples the redox reaction to proton translocation (for every two electrons transferred, four hydrogen ions are translocated across the cytoplasmic membrane), and thus conserves the redox energy in a proton gradient. This subunit may bind ubiquinone. This chain is NADH-quinone oxidoreductase subunit H, found in Rickettsia bellii (strain OSU 85-389).